The sequence spans 130 residues: Small ribosomal subunit protein uS9 (130 aa).

Over residues 101-110 the composition is skewed to basic and acidic residues; that stretch reads AGFLTRDPRM. Residues 101 to 130 are disordered; it reads AGFLTRDPRMKERKKYGLKKARRAPQFSKR. The span at 111-130 shows a compositional bias: basic residues; that stretch reads KERKKYGLKKARRAPQFSKR.

Belongs to the universal ribosomal protein uS9 family.

The protein is Small ribosomal subunit protein uS9 of Clostridium tetani (strain Massachusetts / E88).